The primary structure comprises 274 residues: uncharacterized protein (274 aa).

The stretch at 99–206 (NNVISGYVDL…ESEMEIFIQK (108 aa)) forms a coiled coil.

This is an uncharacterized protein from Dictyostelium discoideum (Social amoeba).